The primary structure comprises 293 residues: MLRIGLFLLTNLAVLVVAGVVLSLLGVGNYRTADGLDLTNLLIFCAVFGFVGSFISLFLSKWMAKKTMGVQLIEQPRNADEKWLVDTVVELSQKAGIKTPEIGVFAAQESNAFATGWNRNDALVAVSLGLLQRFERDEVKAVLAHEIGHVANGDMITLSLIQGVVNTFVMFFARIIGDLVDRVIFKNEEGRGIAFFITTIVAELVLGILASMIVAAFSRYREYRADAAGATLADRGAMIRALQRLQAEMSAGVESPLPSSMRAFGISGGVRNLFASHPPLEARIQALRDSAHG.

Helical transmembrane passes span 4 to 24 (IGLFLLTNLAVLVVAGVVLSL) and 38 to 58 (LTNLLIFCAVFGFVGSFISLF). His145 lines the Zn(2+) pocket. Residue Glu146 is part of the active site. His149 is a binding site for Zn(2+). The next 2 helical transmembrane spans lie at 156-176 (ITLSLIQGVVNTFVMFFARII) and 193-213 (IAFFITTIVAELVLGILASMI). Glu222 is a binding site for Zn(2+).

The protein belongs to the peptidase M48B family. Zn(2+) serves as cofactor.

It localises to the cell inner membrane. The protein is Protease HtpX of Cellvibrio japonicus (strain Ueda107) (Pseudomonas fluorescens subsp. cellulosa).